Reading from the N-terminus, the 263-residue chain is 3-methyl-2-oxobutanoate hydroxymethyltransferase (263 aa).

Residues Asp-45 and Asp-84 each coordinate Mg(2+). 3-methyl-2-oxobutanoate contacts are provided by residues 45–46 (DS), Asp-84, and Lys-112. Mg(2+) is bound at residue Glu-114. Glu-180 acts as the Proton acceptor in catalysis.

The protein belongs to the PanB family. As to quaternary structure, homodecamer; pentamer of dimers. Mg(2+) is required as a cofactor.

It is found in the cytoplasm. It catalyses the reaction 3-methyl-2-oxobutanoate + (6R)-5,10-methylene-5,6,7,8-tetrahydrofolate + H2O = 2-dehydropantoate + (6S)-5,6,7,8-tetrahydrofolate. Its pathway is cofactor biosynthesis; (R)-pantothenate biosynthesis; (R)-pantoate from 3-methyl-2-oxobutanoate: step 1/2. Catalyzes the reversible reaction in which hydroxymethyl group from 5,10-methylenetetrahydrofolate is transferred onto alpha-ketoisovalerate to form ketopantoate. The protein is 3-methyl-2-oxobutanoate hydroxymethyltransferase of Enterobacter sp. (strain 638).